Reading from the N-terminus, the 511-residue chain is Cobyric acid synthase (511 aa).

Residues 251–443 (LLDIAIICLP…IHGIFDNDIF (193 aa)) enclose the GATase cobBQ-type domain. C332 serves as the catalytic Nucleophile. H435 is an active-site residue.

Belongs to the CobB/CobQ family. CobQ subfamily.

It functions in the pathway cofactor biosynthesis; adenosylcobalamin biosynthesis. Functionally, catalyzes amidations at positions B, D, E, and G on adenosylcobyrinic A,C-diamide. NH(2) groups are provided by glutamine, and one molecule of ATP is hydrogenolyzed for each amidation. The chain is Cobyric acid synthase from Listeria innocua serovar 6a (strain ATCC BAA-680 / CLIP 11262).